Reading from the N-terminus, the 119-residue chain is Holo-[acyl-carrier-protein] synthase (119 aa).

Residues aspartate 8 and glutamate 50 each coordinate Mg(2+).

This sequence belongs to the P-Pant transferase superfamily. AcpS family. The cofactor is Mg(2+).

It localises to the cytoplasm. It carries out the reaction apo-[ACP] + CoA = holo-[ACP] + adenosine 3',5'-bisphosphate + H(+). Functionally, transfers the 4'-phosphopantetheine moiety from coenzyme A to a Ser of acyl-carrier-protein. The protein is Holo-[acyl-carrier-protein] synthase of Clavibacter michiganensis subsp. michiganensis (strain NCPPB 382).